The sequence spans 288 residues: MSYQPQTEAATSRFLNVEEAGKTLRIHFNDCGQGDETVVLLHGSGPGATGWANFSRNIDPLVKAGYRVILLDCPGWGKSDSIVNSGSRSDLNARILKSVVDQLDIAKIHLLGNSMGGHSSVAFTLNWPERVGKLVLMGGGTGGMSLFTPMPTEGIKRLNQLYRQPTIENLKLMMDIFVFDTSDLTDALFEARLNNMLSRRDHLENFVKSLEANPKQFPDFGPRLAEIKAQTLIVWGRNDRFVPMDAGLRLLSGIAGSELHIFRDCGHWAQWEHADAFNQLVLNFLARA.

The Proton acceptor role is filled by H267.

The protein belongs to the AB hydrolase superfamily. MhpC family. In terms of assembly, homodimer.

The catalysed reaction is (2Z,4E)-2-hydroxy-6-oxonona-2,4-dienedioate + H2O = (2Z)-2-hydroxypenta-2,4-dienoate + succinate + H(+). It catalyses the reaction (2Z,4E,7E)-2-hydroxy-6-oxonona-2,4,7-trienedioate + H2O = (2Z)-2-hydroxypenta-2,4-dienoate + fumarate + H(+). The protein operates within aromatic compound metabolism; 3-phenylpropanoate degradation. Its function is as follows. Catalyzes the cleavage of the C5-C6 bond of 2-hydroxy-6-oxononadienedioate and 2-hydroxy-6-oxononatrienedioate, a dienol ring fission product of the bacterial meta-cleavage pathway for degradation of phenylpropionic acid. In Escherichia coli O81 (strain ED1a), this protein is 2-hydroxy-6-oxononadienedioate/2-hydroxy-6-oxononatrienedioate hydrolase.